The chain runs to 453 residues: MKLKTTLFGNVYQFKDVKEVLAKANELRSGDVLAGVAAASSQERVAAKQVLSEMTVADIRNNPVIAYEEDCVTRLIQDDVNETAYNRIKNWSISELREYVLSDETSVDDIAFTRKGLTSEVVAAVAKICSNADLIYGGKKMPVIKKANTTIGIPGTFSCRLQPNDTRDDVQSIAAQIYEGLSFGAGDAVIGVNPVTDDVENLTRVLDTVYGVIDKFNIPTQGCVLAHVTTQIEAIRRGAPGGLIFQSICGSEKGLKEFGVELAMLDEARAVGAEFNRIAGENCLYFETGQGSALSAGANFGADQVTMEARNYGLARHYDPFLVNTVVGFIGPEYLYNDRQIIRAGLEDHFMGKLSGISMGCDCCYTNHADADQNLNENLMILLATAGCNYIMGMPLGDDIMLNYQTTAFHDTATVRQLLNLRPSPEFERWLETMGIMANGRLTKRAGDPSLFF.

Substrate-binding positions include 160–162 and Asn-193; that span reads RLQ. Adenosylcob(III)alamin is bound by residues Pro-194 and Gln-246. Glu-287 contacts substrate. Ser-295 serves as a coordination point for adenosylcob(III)alamin. Substrate is bound at residue Asp-362. Met-401 lines the adenosylcob(III)alamin pocket.

Belongs to the EutB family. The basic unit is a heterodimer which dimerizes to form tetramers. The heterotetramers trimerize; 6 large subunits form a core ring with 6 small subunits projecting outwards. Adenosylcob(III)alamin serves as cofactor.

It is found in the bacterial microcompartment. It carries out the reaction ethanolamine = acetaldehyde + NH4(+). It participates in amine and polyamine degradation; ethanolamine degradation. Its function is as follows. Catalyzes the deamination of various vicinal amino-alcohols to oxo compounds. It is spontaneously inactivated by its substrate and reactivated by EutA. May play a role in BMC assembly or maintenance. Functionally, expression of the eut operon allows this bacteria to use ethanolamine (EA) as a carbon, nitrogen and energy source. It relies on cobalamin (vitamin B12) both as a cofactor for the ethanolamine ammonia-lyase activity and to induce the operon. EA enhances bacterial survival in macrophages in a concentration-dependent manner, suggesting it is an important nutrient during infection. The sequence is that of Ethanolamine ammonia-lyase large subunit from Salmonella typhimurium (strain LT2 / SGSC1412 / ATCC 700720).